We begin with the raw amino-acid sequence, 72 residues long: Multiple antibiotic resistance protein MarB (72 aa).

The protein is Multiple antibiotic resistance protein MarB (marB) of Escherichia coli (strain K12).